The primary structure comprises 532 residues: MTSGRVNPNFRLEDQGIEGLGNVYYNLMEPALVQEALSRGEGNLGKGGAFLVTTGKFTGRSPKDKHVVKTASVADTIWWENNAEMSPEGFDALYADMVEHMKGRDYFVQDLVGGADPVHAINVRMVTELAWHNLFIRHLLRRPDREDLDDFIADFTIINCPSFQADPNKHNCRSETVIALNFDRKMILIGGTEYAGENKKSVFTLLNYLLPEKGIMPMHCSANHAKGNPVDTAVFFGLSGTGKTTLSADPDRVLIGDDEHGWASNGTFNFEGGCYAKTINLNPEAEPEIYATTEKFGTVIENMTFDPETFDLNFDDDSLTANMRCAYPLHYISNASASARGGHPKNIIMLTCDAFGVLPPIARLTPAQAMYHFLSGFTSKVAGTERGVTEPEPTFSTCFGAPFMPRRPEVYGNLLREKIAAHGATCWLVNTGWTGGAYGTGSRMPIKATRALLTAALDGSLANAEFRKDPNFGFDVPVAAPGVAEVLLDPRRTWDDKAAYDAQAEKLVQMFSDNFEQYLPYIDEDVKAAAIC.

Arginine 60, tyrosine 194, and lysine 200 together coordinate substrate. ATP is bound by residues lysine 200, histidine 219, and glycine 237–threonine 245. The Mn(2+) site is built by lysine 200 and histidine 219. Mn(2+) is bound at residue aspartate 258. ATP is bound by residues glutamate 286, arginine 324, and threonine 449. Substrate is bound at residue arginine 324.

It belongs to the phosphoenolpyruvate carboxykinase (ATP) family. The cofactor is Mn(2+).

It localises to the cytoplasm. The enzyme catalyses oxaloacetate + ATP = phosphoenolpyruvate + ADP + CO2. It functions in the pathway carbohydrate biosynthesis; gluconeogenesis. Its function is as follows. Involved in the gluconeogenesis. Catalyzes the conversion of oxaloacetate (OAA) to phosphoenolpyruvate (PEP) through direct phosphoryl transfer between the nucleoside triphosphate and OAA. This is Phosphoenolpyruvate carboxykinase (ATP) from Ruegeria sp. (strain TM1040) (Silicibacter sp.).